A 304-amino-acid polypeptide reads, in one-letter code: Protein pxr1 (304 aa).

A compositionally biased stretch (basic residues) spans 1–11 (MGLAAPRKKTK). 3 disordered regions span residues 1-25 (MGLAAPRKKTKISHDPNNTSWSRST), 144-238 (NATA…DTET), and 256-276 (TSLLASNGPSTSRERQPMGRR). The segment covering 15 to 25 (DPNNTSWSRST) has biased composition (polar residues). One can recognise a G-patch domain in the interval 25–79 (TDGFGHRILKAQGWTPGDFLGARNATHSDLFTTASASHIRVVLKDDTLGLGARPK). 2 stretches are compositionally biased toward basic and acidic residues: residues 154–170 (LRVDFPRETSSNEHENG) and 204–238 (GKEMDMSPRKSREKKQEKIQKKRKIGDCDRLDTET). Positions 256-266 (TSLLASNGPST) are enriched in polar residues.

This sequence belongs to the PINX1 family.

The protein resides in the nucleus. Its subcellular location is the nucleolus. In terms of biological role, involved in rRNA-processing at A0, A1 and A2 sites and negatively regulates telomerase. The sequence is that of Protein pxr1 (pxr1) from Aspergillus fumigatus (strain ATCC MYA-4609 / CBS 101355 / FGSC A1100 / Af293) (Neosartorya fumigata).